The chain runs to 460 residues: Proton extrusion protein PxcA (460 aa).

Residues 84–194 (RLPDPEQNGS…KTNLDNSNAP (111 aa)) are disordered. The segment covering 114–136 (NDGKDAENGRQSRDPSILEKLEF) has biased composition (basic and acidic residues). Positions 167–194 (LTSSQPEPSDPSIKTNLAKTNLDNSNAP) are enriched in polar residues. Helical transmembrane passes span 242-262 (FLLLLAILPLLVQIFSKHFLF), 337-357 (GLKNVLADVLSLLVFGWLILI), 373-393 (IYGLSDSAKAFIIILFTDVFV), and 420-440 (FIYGFIATFPVFLDTLFKYWI).

This sequence belongs to the CemA family.

Its subcellular location is the cell inner membrane. Its function is as follows. Required for H(+) efflux immediately after light irradiation to form a rapid H(+) concentration gradient across the thylakoid membranes. Together with PxcL, contributes to transient H(+) uptake following dark to light transition. The sequence is that of Proton extrusion protein PxcA from Synechococcus sp. (strain JA-3-3Ab) (Cyanobacteria bacterium Yellowstone A-Prime).